The chain runs to 562 residues: Formate--tetrahydrofolate ligase (562 aa).

71-78 is an ATP binding site; it reads TPAGEGKS.

This sequence belongs to the formate--tetrahydrofolate ligase family.

The enzyme catalyses (6S)-5,6,7,8-tetrahydrofolate + formate + ATP = (6R)-10-formyltetrahydrofolate + ADP + phosphate. The protein operates within one-carbon metabolism; tetrahydrofolate interconversion. The sequence is that of Formate--tetrahydrofolate ligase from Bacillus cereus (strain ATCC 14579 / DSM 31 / CCUG 7414 / JCM 2152 / NBRC 15305 / NCIMB 9373 / NCTC 2599 / NRRL B-3711).